Here is a 616-residue protein sequence, read N- to C-terminus: Chaperone protein HtpG (616 aa).

Positions 1 to 334 (MTIKQTHSFQ…TADLSLNLSR (334 aa)) are a; substrate-binding. A b region spans residues 335–549 (EILQDNKVIK…ENEMGGNMER (215 aa)). Residues 550 to 616 (IMKSLGQDIP…FVKRINKLIN (67 aa)) are c.

This sequence belongs to the heat shock protein 90 family. Homodimer.

Its subcellular location is the cytoplasm. Functionally, molecular chaperone. Has ATPase activity. The chain is Chaperone protein HtpG from Vesicomyosocius okutanii subsp. Calyptogena okutanii (strain HA).